The sequence spans 82 residues: uncharacterized protein (82 aa).

Its subcellular location is the plastid. It is found in the chloroplast. This is an uncharacterized protein from Vicia faba (Broad bean).